Consider the following 116-residue polypeptide: Mitochondrial import inner membrane translocase subunit PAM16 like 2 (116 aa).

The N-terminal 27 residues, 1 to 27 (MAGRLLANLIVMGSGIIGRAVFQAYRQ), are a transit peptide targeting the mitochondrion. Residues 57 to 106 (EARQILGVTEKTSWEEILQKYDKLFENNAKAGSFYLQSKVHRAKECLEVV) form a J-like region.

Belongs to the TIM16/PAM16 family. As to expression, expressed constitutively and ubiquitously, except in root tips, at low levels.

The protein localises to the mitochondrion inner membrane. Its subcellular location is the cytoplasm. In terms of biological role, regulates ATP-dependent protein translocation into the mitochondrial matrix. Involved in the uptake of thaxtomin, a phytotoxin produced by Streptomyces bacteria, that causes dramatic cell swelling, reduced seedling growth, and inhibition of cellulose synthesis. Modulates polar auxin transport. Involved in importing a negative regulator of plant immunity into mitochondria, thus protecting plants from over-accumulation of reactive oxygen species (ROS) and preventing autoimmunity. Confers sensitivity to virulent pathogens such as the oomycete H.arabidopsidis Noco2 and the bacteria P.syringae pv. maculicola ES4326. The sequence is that of Mitochondrial import inner membrane translocase subunit PAM16 like 2 from Arabidopsis thaliana (Mouse-ear cress).